Here is an 83-residue protein sequence, read N- to C-terminus: ATP synthase subunit c (83 aa).

Transmembrane regions (helical) follow at residues 9-29 and 51-71; these read LICVGAALSIGLAGLGAGIGI and MVFMILGMALAESIAIYGLVI.

The protein belongs to the ATPase C chain family. In terms of assembly, F-type ATPases have 2 components, F(1) - the catalytic core - and F(0) - the membrane proton channel. F(1) has five subunits: alpha(3), beta(3), gamma(1), delta(1), epsilon(1). F(0) has three main subunits: a(1), b(2) and c(10-14). The alpha and beta chains form an alternating ring which encloses part of the gamma chain. F(1) is attached to F(0) by a central stalk formed by the gamma and epsilon chains, while a peripheral stalk is formed by the delta and b chains.

The protein localises to the cell inner membrane. F(1)F(0) ATP synthase produces ATP from ADP in the presence of a proton or sodium gradient. F-type ATPases consist of two structural domains, F(1) containing the extramembraneous catalytic core and F(0) containing the membrane proton channel, linked together by a central stalk and a peripheral stalk. During catalysis, ATP synthesis in the catalytic domain of F(1) is coupled via a rotary mechanism of the central stalk subunits to proton translocation. In terms of biological role, key component of the F(0) channel; it plays a direct role in translocation across the membrane. A homomeric c-ring of between 10-14 subunits forms the central stalk rotor element with the F(1) delta and epsilon subunits. This is ATP synthase subunit c from Desulfotalea psychrophila (strain LSv54 / DSM 12343).